We begin with the raw amino-acid sequence, 319 residues long: tRNA dimethylallyltransferase (319 aa).

15–22 (GPTASGKS) serves as a coordination point for ATP. 17 to 22 (TASGKS) contributes to the substrate binding site. Interaction with substrate tRNA regions lie at residues 40–43 (DSRQ) and 164–168 (QRLVR).

It belongs to the IPP transferase family. In terms of assembly, monomer. Mg(2+) serves as cofactor.

It carries out the reaction adenosine(37) in tRNA + dimethylallyl diphosphate = N(6)-dimethylallyladenosine(37) in tRNA + diphosphate. Functionally, catalyzes the transfer of a dimethylallyl group onto the adenine at position 37 in tRNAs that read codons beginning with uridine, leading to the formation of N6-(dimethylallyl)adenosine (i(6)A). The sequence is that of tRNA dimethylallyltransferase from Chlorobium phaeobacteroides (strain DSM 266 / SMG 266 / 2430).